Reading from the N-terminus, the 695-residue chain is MANKREYPLAKTRNIGIMAHIDAGKTTATERILYYTGKIHKIGETHDGASQMDWMDEEKERGITITSAATTAVWKDNRINIIDTPGHVDFTVEVERALRVLDGAVTVLDAQAGVEPQTETVWRQADQFNVPRIVFANKMDKIGANFDYSVQTIKDRLNVTPLPIQMPIGAEDDFIGLVDLVKMVAYVYDEDKLGTNWDTVEIPDDMKEEAQKRHDEMVETLADIDDNLMEKYLEGEEISVDEIKAAIRKGTLEEQIFPVLAGSAYKDKGIQMMLDAVIDYLPSPIDVKPFVAHDADGNEIELTAGDDKPFAALAFKIATDPFVGRLTFLRVYTGSLQSGSYVLNATKDKRERIGRLLQMHSNQQQEIPEVFSGDIAAAIGLKNTTTGDSLTDPDHPLQLESMDFPEPVIQVSVEPKSKADQDKMDKGLQKLAEEDPTFKAETNPETGETLIAGMGELHLDIIVERLRREFHAEVTVGKPQVSYREAFTKTASAQGKFVRQSGGKGQYGDVWIEFTPLKEGEGFEFEDAIVGGVVPREFIPAVEQGLKEAMQNGVLAGYPLVDMHAKLYDGSYHEVDSSEAAFKVAASLALKNAAKKADPVILEPIMKVDIVVPQDNMGDVMGQVTARRGTIDGMEERGNAQLIHSFVPLSEMFGYATALRSATQGRGTFTMTFDHYSAVPKSVQEDIIKKNGGNN.

In terms of domain architecture, tr-type G spans 10 to 285 (AKTRNIGIMA…AVIDYLPSPI (276 aa)). Residues 19 to 26 (AHIDAGKT), 83 to 87 (DTPGH), and 137 to 140 (NKMD) contribute to the GTP site.

The protein belongs to the TRAFAC class translation factor GTPase superfamily. Classic translation factor GTPase family. EF-G/EF-2 subfamily.

The protein resides in the cytoplasm. Catalyzes the GTP-dependent ribosomal translocation step during translation elongation. During this step, the ribosome changes from the pre-translocational (PRE) to the post-translocational (POST) state as the newly formed A-site-bound peptidyl-tRNA and P-site-bound deacylated tRNA move to the P and E sites, respectively. Catalyzes the coordinated movement of the two tRNA molecules, the mRNA and conformational changes in the ribosome. This Limosilactobacillus reuteri (strain DSM 20016) (Lactobacillus reuteri) protein is Elongation factor G.